We begin with the raw amino-acid sequence, 426 residues long: Anaerobic glycerol-3-phosphate dehydrogenase subunit B (426 aa).

The protein belongs to the anaerobic G-3-P dehydrogenase subunit B family. In terms of assembly, composed of a catalytic GlpA/B dimer and of membrane bound GlpC. FMN serves as cofactor.

The enzyme catalyses a quinone + sn-glycerol 3-phosphate = dihydroxyacetone phosphate + a quinol. It functions in the pathway polyol metabolism; glycerol degradation via glycerol kinase pathway; glycerone phosphate from sn-glycerol 3-phosphate (anaerobic route): step 1/1. Its function is as follows. Conversion of glycerol 3-phosphate to dihydroxyacetone. Uses fumarate or nitrate as electron acceptor. This is Anaerobic glycerol-3-phosphate dehydrogenase subunit B from Haemophilus ducreyi (strain 35000HP / ATCC 700724).